Consider the following 114-residue polypeptide: Protein ORF3 (114 aa).

Hydrophobic regions lie at residues 6-24 (WALGLFCCCSSCFCLCCSR) and 33-53 (AVVGGAAAVPAVVSGVTGLIL). Residues 28 to 68 (VSRLAAVVGGAAAVPAVVSGVTGLILSPSQSPIFIQPTPSP) form an interaction with host HPX region. Residues 48–72 (VTGLILSPSQSPIFIQPTPSPRMSP) are interaction with the capsid protein. Serine 71 carries the phosphoserine; by host modification. Residues 72 to 114 (PLRPGLDLVFANPSDHSAPLGATRPSAPPLPHVVDLPQLGPRR) form a homodimerization, and interaction with host AMBP/bikunin region. The segment at 85–114 (SDHSAPLGATRPSAPPLPHVVDLPQLGPRR) is disordered. Residues 95–104 (RPSAPPLPHV) are interaction with host SRC, HCK, FYN, PIK3R3 and GRB2. The PTAP/PSAP motif signature appears at 96–99 (PSAP).

The protein belongs to the hepevirus ORF3 protein family. As to quaternary structure, forms homooligomers. Interacts with host SRC, HCK, FYN, PIK3R3 and GRB2 (via SH3 domain); binding does not activate the kinases. Interacts with host AMBP/bikunin and AMBP/alpha-1-microglobulin peptides. Interacts with host HPX/hemopexin. Interacts (when phosphorylated) with capsid protein ORF2. Interacts with host TSG101; this interaction plays a role in viral release from the host cell. Interacts with host SIRPA; this interaction down-regulates the phosphorylation of host IRF3. In terms of processing, palmitoylated in the N-terminus.

It localises to the host endoplasmic reticulum membrane. The protein resides in the host cytoplasm. Its subcellular location is the host cytoskeleton. The protein localises to the virion. It is found in the host cell membrane. Small multifunctional phosphoprotein involved in virion morphogenesis, egress and counteracting host innate immunity. Plays critical roles in the final steps of viral release by interacting with host TSG101, a member of the vacuolar protein-sorting pathway and using other cellular host proteins involved in vesicle formation pathway. Also acts as a viroporin and forms ion conductive pores allowing viral particle release. Impairs the generation of type I interferon by down-regulating host TLR3 and TLR7 as well as their downstream signaling pathways. Down-regulates the phosphorylation of host IRF3 via the interaction with host SIRP-alpha, thereby inhibiting IFN-I expression. Interacts with host microtubules. The sequence is that of Protein ORF3 from Hepatitis E virus genotype 1 (isolate Human/India/Hyderabad) (HEV-1).